The primary structure comprises 373 residues: Chaperone protein DnaJ (373 aa).

The 66-residue stretch at 5 to 70 folds into the J domain; it reads DFYATLGVAR…EKRAMYDQYG (66 aa). A CR-type zinc finger spans residues 134–212; the sequence is GVKKRINIPT…CRGAGRNKAV (79 aa). Positions 147, 150, 164, 167, 186, 189, 200, and 203 each coordinate Zn(2+). CXXCXGXG motif repeat units follow at residues 147–154, 164–171, 186–193, and 200–207; these read CDVCNGSG, CPTCKGSG, CPTCHGAG, and CVKCRGAG.

The protein belongs to the DnaJ family. In terms of assembly, homodimer. It depends on Zn(2+) as a cofactor.

The protein localises to the cytoplasm. In terms of biological role, participates actively in the response to hyperosmotic and heat shock by preventing the aggregation of stress-denatured proteins and by disaggregating proteins, also in an autonomous, DnaK-independent fashion. Unfolded proteins bind initially to DnaJ; upon interaction with the DnaJ-bound protein, DnaK hydrolyzes its bound ATP, resulting in the formation of a stable complex. GrpE releases ADP from DnaK; ATP binding to DnaK triggers the release of the substrate protein, thus completing the reaction cycle. Several rounds of ATP-dependent interactions between DnaJ, DnaK and GrpE are required for fully efficient folding. Also involved, together with DnaK and GrpE, in the DNA replication of plasmids through activation of initiation proteins. This Neisseria meningitidis serogroup C (strain 053442) protein is Chaperone protein DnaJ.